Reading from the N-terminus, the 992-residue chain is Sorting nexin-19 (992 aa).

A PXA domain is found at 95-272 (ERQLEREINR…VLVGIFSKAR (178 aa)). The interval 410 to 442 (ALEPKDGEASEGAEAEEGPGTETETGLPVSTLN) is disordered. Acidic residues predominate over residues 418–428 (ASEGAEAEEGP). Residues 533 to 663 (LRITGTITAR…EFLALNTDAR (131 aa)) enclose the PX domain. A 1,2-diacyl-sn-glycero-3-phospho-(1D-myo-inositol-3-phosphate) is bound by residues R582 and R629. 3 disordered regions span residues 692-726 (FPRS…SRLR), 778-797 (QPTK…RVDS), and 973-992 (AATT…GVSS). Composition is skewed to basic and acidic residues over residues 709–719 (TESKPQTEGKK) and 782–795 (APEK…KGRV). The segment covering 980–992 (DTPGNSKRMGVSS) has biased composition (polar residues).

The protein belongs to the sorting nexin family. As to quaternary structure, interacts with PTPRN.

The protein localises to the early endosome membrane. It localises to the cytoplasmic vesicle membrane. Functionally, plays a role in intracellular vesicle trafficking and exocytosis. May play a role in maintaining insulin-containing dense core vesicles in pancreatic beta-cells and in preventing their degradation. May play a role in insulin secretion. Interacts with membranes containing phosphatidylinositol 3-phosphate (PtdIns(3P)). The protein is Sorting nexin-19 (SNX19) of Homo sapiens (Human).